Reading from the N-terminus, the 391-residue chain is 3-ketoacyl-CoA thiolase (391 aa).

The Acyl-thioester intermediate role is filled by C90. Residues H347 and C377 each act as proton acceptor in the active site.

This sequence belongs to the thiolase-like superfamily. Thiolase family.

The enzyme catalyses an acyl-CoA + acetyl-CoA = a 3-oxoacyl-CoA + CoA. It participates in lipid metabolism; fatty acid beta-oxidation. Involved in the degradation of long-chain fatty acids. The chain is 3-ketoacyl-CoA thiolase (fadA) from Bacillus subtilis (strain 168).